A 414-amino-acid polypeptide reads, in one-letter code: 2,3-diketo-5-methylthiopentyl-1-phosphate enolase (414 aa).

Catalysis depends on Lys99, which acts as the Proton acceptor. Substrate contacts are provided by residues Lys148, 174-177, His265, Gly338, and 360-361; these read KDDE and GG. Mg(2+) contacts are provided by Lys174, Asp176, and Glu177. Residue Lys174 is modified to N6-carboxylysine.

This sequence belongs to the RuBisCO large chain family. Type IV subfamily. As to quaternary structure, homodimer. Requires Mg(2+) as cofactor.

It carries out the reaction 5-methylsulfanyl-2,3-dioxopentyl phosphate = 2-hydroxy-5-methylsulfanyl-3-oxopent-1-enyl phosphate. It participates in amino-acid biosynthesis; L-methionine biosynthesis via salvage pathway; L-methionine from S-methyl-5-thio-alpha-D-ribose 1-phosphate: step 3/6. In terms of biological role, catalyzes the enolization of 2,3-diketo-5-methylthiopentyl-1-phosphate (DK-MTP-1-P) into 2-hydroxy-3-keto-5-methylthiopentenyl-1-phosphate (HK-MTPenyl-1-P). The chain is 2,3-diketo-5-methylthiopentyl-1-phosphate enolase from Bacillus cereus (strain AH820).